Reading from the N-terminus, the 930-residue chain is Protocadherin gamma-B6 (930 aa).

An N-terminal signal peptide occupies residues 1 to 30 (MGGSCAQRRRAGPRQVLFPLLLPFFYPTLC). 6 Cadherin domains span residues 31–133 (EPIR…APQF), 134–242 (DKKE…PPVF), 243–347 (SRDE…SPEI), 348–452 (IITS…APVF), 453–562 (DQTS…APRV), and 570–675 (DGSA…LPDL). At 31–691 (EPIRYSIPEE…SDPQAELQFY (661 aa)) the chain is on the extracellular side. Residues Asn-304, Asn-419, and Asn-545 are each glycosylated (N-linked (GlcNAc...) asparagine). The chain crosses the membrane as a helical span at residues 692–712 (LVVALALISVLFLLAVILAIA). Over 713–930 (LRLRRSLSPT…KKKSGKKEKK (218 aa)) the chain is Cytoplasmic. Disordered regions lie at residues 791–839 (PHGG…WPNN) and 900–930 (ATLT…KEKK). The span at 800–839 (HPETLTSQAPPNTDWRFSQAQRPGTSGSQNGDDTGTWPNN) shows a compositional bias: polar residues. Basic residues predominate over residues 920–930 (NKKKSGKKEKK).

Its subcellular location is the cell membrane. Its function is as follows. Potential calcium-dependent cell-adhesion protein. May be involved in the establishment and maintenance of specific neuronal connections in the brain. This Pan troglodytes (Chimpanzee) protein is Protocadherin gamma-B6 (PCDHGB6).